We begin with the raw amino-acid sequence, 503 residues long: Aspartyl/glutamyl-tRNA(Asn/Gln) amidotransferase subunit B (503 aa).

Belongs to the GatB/GatE family. GatB subfamily. In terms of assembly, heterotrimer of A, B and C subunits.

The catalysed reaction is L-glutamyl-tRNA(Gln) + L-glutamine + ATP + H2O = L-glutaminyl-tRNA(Gln) + L-glutamate + ADP + phosphate + H(+). The enzyme catalyses L-aspartyl-tRNA(Asn) + L-glutamine + ATP + H2O = L-asparaginyl-tRNA(Asn) + L-glutamate + ADP + phosphate + 2 H(+). Functionally, allows the formation of correctly charged Asn-tRNA(Asn) or Gln-tRNA(Gln) through the transamidation of misacylated Asp-tRNA(Asn) or Glu-tRNA(Gln) in organisms which lack either or both of asparaginyl-tRNA or glutaminyl-tRNA synthetases. The reaction takes place in the presence of glutamine and ATP through an activated phospho-Asp-tRNA(Asn) or phospho-Glu-tRNA(Gln). This Rhodococcus jostii (strain RHA1) protein is Aspartyl/glutamyl-tRNA(Asn/Gln) amidotransferase subunit B.